Here is a 91-residue protein sequence, read N- to C-terminus: Cell division topological specificity factor (91 aa).

It belongs to the MinE family.

Prevents the cell division inhibition by proteins MinC and MinD at internal division sites while permitting inhibition at polar sites. This ensures cell division at the proper site by restricting the formation of a division septum at the midpoint of the long axis of the cell. This Wigglesworthia glossinidia brevipalpis protein is Cell division topological specificity factor.